We begin with the raw amino-acid sequence, 144 residues long: Transcriptional regulator SlyA (144 aa).

In terms of domain architecture, HTH marR-type spans 2–135 (ESTLGSDLAR…LVGLIGKLEQ (134 aa)). Residues 49–72 (QIQLAKAIGIEQPSLVRTLDQLEE) constitute a DNA-binding region (H-T-H motif).

It belongs to the SlyA family. In terms of assembly, homodimer.

Functionally, transcription regulator that can specifically activate or repress expression of target genes. This is Transcriptional regulator SlyA from Serratia proteamaculans (strain 568).